Reading from the N-terminus, the 236-residue chain is Small ribosomal subunit protein eS6 (236 aa).

Phosphoserine is present on residues Ser232 and Ser233.

The protein belongs to the eukaryotic ribosomal protein eS6 family. In terms of processing, phosphorylated.

This chain is Small ribosomal subunit protein eS6 (RPS6), found in Eremothecium gossypii (strain ATCC 10895 / CBS 109.51 / FGSC 9923 / NRRL Y-1056) (Yeast).